Here is a 169-residue protein sequence, read N- to C-terminus: Cell division inhibitor SulA (169 aa).

Residues 106–112 (ALRTGNY) form a ftsZ binding region. The segment at 162 to 169 (KIHSNLYH) is lon protease binding.

This sequence belongs to the SulA family. Interacts with FtsZ. In terms of processing, is rapidly cleaved and degraded by the Lon protease once DNA damage is repaired.

Functionally, component of the SOS system and an inhibitor of cell division. Accumulation of SulA causes rapid cessation of cell division and the appearance of long, non-septate filaments. In the presence of GTP, binds a polymerization-competent form of FtsZ in a 1:1 ratio, thus inhibiting FtsZ polymerization and therefore preventing it from participating in the assembly of the Z ring. This mechanism prevents the premature segregation of damaged DNA to daughter cells during cell division. In Shigella flexneri serotype 5b (strain 8401), this protein is Cell division inhibitor SulA.